A 222-amino-acid polypeptide reads, in one-letter code: E3 ubiquitin-protein ligase RNF138 (222 aa).

The RING-type zinc-finger motif lies at 17 to 57 (CPVCQEILQTPVRTQTCRHVFCRKCFMLAMKSGGAYCPLCR). Positions 85, 88, 100, and 104 each coordinate Zn(2+). The segment at 85–104 (CMYCGKMMKLHYMKLHYKSC) adopts a C2HC RNF-type zinc-finger fold. C2H2-type zinc fingers lie at residues 134 to 157 (YKCP…NNVH) and 164 to 192 (MVCP…NARH). The 19-residue stretch at 202–220 (INIDEEAQFQIAVANSYKI) folds into the UIM domain.

Interacts with nlk.2 (via C-terminus) and ube2k. In terms of processing, auto-ubiquitinated.

It is found in the chromosome. The catalysed reaction is S-ubiquitinyl-[E2 ubiquitin-conjugating enzyme]-L-cysteine + [acceptor protein]-L-lysine = [E2 ubiquitin-conjugating enzyme]-L-cysteine + N(6)-ubiquitinyl-[acceptor protein]-L-lysine.. It functions in the pathway protein modification; protein ubiquitination. In terms of biological role, E3 ubiquitin-protein ligase involved in DNA damage response by promoting DNA resection and homologous recombination. Recruited to sites of double-strand breaks following DNA damage and specifically promotes double-strand break repair via homologous recombination. Together with nlk.2, involved in the ubiquitination and degradation of TCF/LEF. Also exhibits auto-ubiquitination activity in combination with ube2k. May act as a negative regulator in the Wnt/beta-catenin-mediated signaling pathway. The protein is E3 ubiquitin-protein ligase RNF138 (rnf138) of Xenopus laevis (African clawed frog).